The primary structure comprises 551 residues: Colicin-E6 (551 aa).

5 disordered regions span residues 1–74 (MSGG…SGGG), 244–269 (LSPGVTNNTDKDVRPAGFTQGGNTRD), 293–317 (PDQVKQRQDEENRRQQEWDATHPVE), 406–501 (NKQA…WYGD), and 517–551 (EGYRASDGQHLGSFEPKTGNQLKGPDPKRNIKKYL). Positions 20–35 (INGGPTGLGVGGGASD) are enriched in gly residues. The span at 36–45 (GSGWSSENNP) shows a compositional bias: low complexity. A compositionally biased stretch (gly residues) spans 46 to 74 (WGGGSGSGIHWGGGSGHGNGGGNGNSGGG). 2 stretches are compositionally biased toward basic and acidic residues: residues 296-317 (VKQRQDEENRRQQEWDATHPVE) and 430-484 (ESRK…EGKP). The segment at 455 to 551 (KGVKDYGHDY…DPKRNIKKYL (97 aa)) is ribosome inactivating activity. The tract at residues 530–551 (FEPKTGNQLKGPDPKRNIKKYL) is binding of immunity protein.

It belongs to the cloacin colicin family.

In terms of biological role, inactivates ribosomes by hydrolyzing 16S RNA in 30S ribosomes at a specific site. Its function is as follows. Colicins are polypeptide toxins produced by and active against E.coli and closely related bacteria. The sequence is that of Colicin-E6 from Escherichia coli.